The primary structure comprises 114 residues: Amphinase-2 (114 aa).

His-15 (proton acceptor) is an active-site residue. 4 disulfide bridges follow: Cys-26–Cys-79, Cys-41–Cys-85, Cys-59–Cys-100, and Cys-97–Cys-114. Asn-27 carries N-linked (GlcNAc...) asparagine glycosylation. 42-46 (KPINT) provides a ligand contact to substrate. Residues Asn-67 and Asn-91 are each glycosylated (N-linked (GlcNAc...) asparagine). The active-site Proton donor is the His-107.

The protein belongs to the pancreatic ribonuclease family. As to quaternary structure, monomer. Post-translationally, there are at least four different forms arising from glycan heterogeneity.

It localises to the secreted. Endonuclease, hydrolyzes highly polymerized RNA, poly(U) and poly(C), and the dinucleotides CpA and UpA. Hydrolyzes 18S and 28S ribosomal RNA. More active towards rCA than rUA or rUG. Has cytotoxic activity against cultured human submaxillary gland carcinoma cells. This Lithobates pipiens (Northern leopard frog) protein is Amphinase-2.